Here is a 711-residue protein sequence, read N- to C-terminus: BCLAF1 and THRAP3 family member 3 (711 aa).

Over residues 1-15 (MARSRSRSPRWKHRS) the composition is skewed to basic residues. 2 disordered regions span residues 1 to 42 (MARS…YRKD) and 48 to 67 (AWRM…PSRG). Phosphoserine is present on residues Ser15 and Ser17. A compositionally biased stretch (basic and acidic residues) spans 48-57 (AWRMDSEKHG). 3 positions are modified to phosphoserine: Ser78, Ser80, and Ser187. Disordered regions lie at residues 94 to 350 (KPHR…KDSI) and 371 to 404 (EKIK…PSPI). Basic and acidic residues-rich tracts occupy residues 163 to 197 (FRFE…DFET), 204 to 213 (RYPEDRDFRK), 220 to 242 (RPKD…KPEH), 296 to 311 (SDGR…DRKY), 318 to 349 (LNRE…KKDS), and 371 to 383 (EKIK…RKES). Residue Lys400 forms a Glycyl lysine isopeptide (Lys-Gly) (interchain with G-Cter in SUMO2) linkage. 2 positions are modified to phosphoserine: Ser402 and Ser578.

This sequence belongs to the BCLAF1/THRAP3 family.

It localises to the mitochondrion. In Homo sapiens (Human), this protein is BCLAF1 and THRAP3 family member 3.